The primary structure comprises 530 residues: Polyprotein pp62 (530 aa).

Belongs to the asfivirus polyprotein pp62 family. As to quaternary structure, monomer. Predominantly exists as a monomer, with very little dimers. Homodimerization seems to be linked to low pH. In terms of assembly, homodimer; disulfide-linked. Homotrimer; disulfide-linked. Homohexamer. Post-translationally, monoubiquitinated in vitro by viral UBCv1. In terms of processing, specific enzymatic cleavages in vivo by the viral pS273R protease yield mature proteins.

Its subcellular location is the host cytoplasm. The protein localises to the host perinuclear region. The protein resides in the virion. Its function is as follows. Essential for the correct assembly and maturation of the core of the virion. Component of the core shell. Binds to phosphatidylserine, which may enable the core shell binding with the inner membrane. Functionally, component of the core shell. Binds to phosphatidylserine and DNA, which may link the core shell to the inner membrane and to the viral nucleoid. In terms of biological role, component of the core shell. In African swine fever virus (strain Badajoz 1971 Vero-adapted) (Ba71V), this protein is Polyprotein pp62.